A 304-amino-acid chain; its full sequence is D-alanine--D-alanine ligase (304 aa).

Residues 103–299 (KLIWQALGLP…FADLCIEILK (197 aa)) form the ATP-grasp domain. 129–184 (EEKLGLPMFVKPAAEGSSVGVVKVKEKGRLKSVYEELKHLQGEIIAERFIGGGEYS) serves as a coordination point for ATP. 3 residues coordinate Mg(2+): aspartate 253, glutamate 266, and asparagine 268.

The protein belongs to the D-alanine--D-alanine ligase family. Mg(2+) serves as cofactor. Mn(2+) is required as a cofactor.

Its subcellular location is the cytoplasm. It carries out the reaction 2 D-alanine + ATP = D-alanyl-D-alanine + ADP + phosphate + H(+). It participates in cell wall biogenesis; peptidoglycan biosynthesis. Cell wall formation. This Neisseria gonorrhoeae (strain ATCC 700825 / FA 1090) protein is D-alanine--D-alanine ligase.